Consider the following 908-residue polypeptide: Flap endonuclease GEN homolog 1 (908 aa).

An XPG-N domain region spans residues 2–96; sequence GVNDLWQILE…SKRTQTRYGP (95 aa). 7 residues coordinate Mg(2+): Asp30, Glu75, Glu134, Glu136, Asp155, Asp157, and Asp208. The XPG-I domain stretch occupies residues 122 to 208; that stretch reads ECLGMPWVQA…VGLAVLLGCD (87 aa). A 5'-3' exonuclease domain region spans residues 208 to 383; that stretch reads DYLPKGVPGV…LLVLLTRYDM (176 aa). A chromodomain region spans residues 389-463; it reads GRKTSNQLQP…VYQKQLSETK (75 aa). 4 disordered regions span residues 460 to 482, 629 to 650, 792 to 834, and 853 to 886; these read SETKGRKQKSMKNKPKGSHLPEA, YESEQGTSDSEGSGRDLQQSNP, RDSS…NKLR, and AEDEENGFSDLGRSPQSFRPCHDKDENSTASWEN. Residues 465–476 show a composition bias toward basic residues; that stretch reads RKQKSMKNKPKG. 2 positions are modified to phosphoserine: Ser794 and Ser795. The segment covering 824-834 has biased composition (basic and acidic residues); it reads HVRDSTHNKLR.

Belongs to the XPG/RAD2 endonuclease family. GEN subfamily. As to quaternary structure, largely monomeric, dimerizes on the Holliday junction and the first nick occurs upon dimerization at the junction. Mg(2+) serves as cofactor. In terms of tissue distribution, expressed in bone marrow and testis and to a lesser extent in thymus, spleen, brain and colon.

Its subcellular location is the nucleus. Functionally, endonuclease which resolves Holliday junctions (HJs) by the introduction of symmetrically related cuts across the junction point, to produce nicked duplex products in which the nicks can be readily ligated. Four-way DNA intermediates, also known as Holliday junctions, are formed during homologous recombination and DNA repair, and their resolution is necessary for proper chromosome segregation. Cleaves HJs by a nick and counter-nick mechanism involving dual coordinated incisions that lead to the formation of ligatable nicked duplex products. Cleavage of the first strand is rate limiting, while second strand cleavage is rapid. Largely monomeric, dimerizes on the HJ and the first nick occurs upon dimerization at the junction. Efficiently cleaves both single and double HJs contained within large recombination intermediates. Exhibits a weak sequence preference for incision between two G residues that reside in a T-rich region of DNA. Also has endonuclease activity on 5'-flap and replication fork (RF) DNA substrates. The polypeptide is Flap endonuclease GEN homolog 1 (Gen1) (Mus musculus (Mouse)).